A 224-amino-acid chain; its full sequence is Adenylate kinase (224 aa).

10–15 (GSGKST) contributes to the ATP binding site. The segment at 30 to 59 (ASGDIIRAEINKGNALGREMKKYIEKGDLL) is NMP. AMP contacts are provided by residues S31, R36, 57–59 (DLL), 83–86 (GYPR), and Q90. Residues 124–161 (GRRICRQCGAVYHIKYNPSKVPGKCDICGGEVIQREDD) form an LID region. R125 contributes to the ATP binding site. Zn(2+) contacts are provided by C128 and C131. 134–135 (VY) is an ATP binding site. Zn(2+)-binding residues include C148 and C151. AMP contacts are provided by R158 and R169. G197 lines the ATP pocket.

This sequence belongs to the adenylate kinase family. Monomer.

The protein resides in the cytoplasm. It catalyses the reaction AMP + ATP = 2 ADP. It participates in purine metabolism; AMP biosynthesis via salvage pathway; AMP from ADP: step 1/1. Catalyzes the reversible transfer of the terminal phosphate group between ATP and AMP. Plays an important role in cellular energy homeostasis and in adenine nucleotide metabolism. This is Adenylate kinase from Thermococcus sibiricus (strain DSM 12597 / MM 739).